The following is a 1061-amino-acid chain: Calcium-transporting ATPase 4, endoplasmic reticulum-type (1061 aa).

The disordered stretch occupies residues 1–21; the sequence is MGKGGEDCGNKQTNSSELVKS. Over 1–70 the chain is Cytoplasmic; that stretch reads MGKGGEDCGN…NELEKPEGTS (70 aa). Residues 71–91 form a helical membrane-spanning segment; sequence IFKLILEQFNDTLVRILLAAA. At 92-115 the chain is on the lumenal side; the sequence is VISFVLAFFDGDEGGEMGITAFVE. The chain crosses the membrane as a helical span at residues 116–135; sequence PLVIFLILIVNAIVGIWQET. The Cytoplasmic portion of the chain corresponds to 136-278; that stretch reads NAEKALEALK…EEDTPLKKKL (143 aa). The helical transmembrane segment at 279-298 threads the bilayer; the sequence is NEFGEVLTMIIGLICALVWL. At 299-327 the chain is on the lumenal side; the sequence is INVKYFLSWEYVDGWPRNFKFSFEKCTYY. A helical transmembrane segment spans residues 328–345; the sequence is FEIAVALAVAAIPEGLPA. Residues valine 336, alanine 337, isoleucine 339, and glutamate 341 each coordinate Ca(2+). The Cytoplasmic segment spans residues 346–786; the sequence is VITTCLALGT…GEGRSIYNNM (441 aa). The 4-aspartylphosphate intermediate role is filled by aspartate 383. Residues aspartate 731 and aspartate 735 each coordinate Mg(2+). The chain crosses the membrane as a helical span at residues 787–806; sequence KAFIRYMISSNIGEVASIFL. Residues asparagine 797 and glutamate 800 each contribute to the Ca(2+) site. Topologically, residues 807–816 are lumenal; the sequence is TAALGIPEGM. Residues 817–837 traverse the membrane as a helical segment; it reads IPVQLLWVNLVTDGPPATALG. Residues asparagine 825, threonine 828, and aspartate 829 each contribute to the Ca(2+) site. Residues 838-857 are Cytoplasmic-facing; it reads FNPPDKDIMKKPPRRSDDSL. The chain crosses the membrane as a helical span at residues 858–880; it reads ITAWILFRYMVIGLYVGVATVGV. Residues 881-950 are Lumenal-facing; that stretch reads FIIWYTHNSF…YFQQGKIKAS (70 aa). A helical membrane pass occupies residues 951-970; that stretch reads TLSLSVLVAIEMFNSLNALS. Glutamate 961 contacts Ca(2+). The Cytoplasmic portion of the chain corresponds to 971 to 983; it reads EDGSLVTMPPWVN. The helical transmembrane segment at 984 to 1002 threads the bilayer; the sequence is PWLLLAMAVSFGLHFVILY. The Lumenal segment spans residues 1003-1017; the sequence is VPFLAQVFGIVPLSL. The chain crosses the membrane as a helical span at residues 1018–1038; the sequence is NEWLLVLAVSLPVILIDEVLK. Topologically, residues 1039–1061 are cytoplasmic; that stretch reads FVGRCTSGYRYSPRTPSAKQKEE.

It belongs to the cation transport ATPase (P-type) (TC 3.A.3) family. Type IIA subfamily.

The protein localises to the membrane. It carries out the reaction Ca(2+)(in) + ATP + H2O = Ca(2+)(out) + ADP + phosphate + H(+). In terms of biological role, this magnesium-dependent enzyme catalyzes the hydrolysis of ATP coupled with the translocation of calcium from the cytosol to an endomembrane compartment. In Arabidopsis thaliana (Mouse-ear cress), this protein is Calcium-transporting ATPase 4, endoplasmic reticulum-type (ECA4).